Consider the following 418-residue polypeptide: Serine/threonine-protein kinase PCRK1 (418 aa).

The disordered stretch occupies residues 36-63 (GSEFNSRDVSGTSTESSMGRKNSYPPVS). The region spanning 84–369 (FSRSVMIGEG…EVLEMVNKIV (286 aa)) is the Protein kinase domain. ATP is bound by residues 90–98 (IGEGGFGCV) and lysine 118. Catalysis depends on aspartate 218, which acts as the Proton acceptor. A phosphoserine mark is found at serine 373, serine 377, and serine 385.

Belongs to the protein kinase superfamily. Ser/Thr protein kinase family. Interacts with FLS2.

It is found in the cell membrane. The enzyme catalyses L-seryl-[protein] + ATP = O-phospho-L-seryl-[protein] + ADP + H(+). It catalyses the reaction L-threonyl-[protein] + ATP = O-phospho-L-threonyl-[protein] + ADP + H(+). In terms of biological role, involved in the activation of early immune responses. Plays a role in pattern-triggered immunity (PTI) induced by pathogen-associated molecular patterns (PAMPs) and damage-associated molecular patterns (DAMPs). Contributes to PTI in response to the bacterial pathogen Pseudomonas syringae pv maculicola strain ES4326. Contributes to PTI in response to the bacterial pathogen Pseudomonas syringae pv tomato strain DC3000. Functions redundantly with PCRK2 in basal resistance against bacterial pathogens and in regulation of plant immunity. Functions together with PCRK2 downstream of the PAMP receptor FLS2. Contributes to the induction of SARD1 and CBP60G, which are transcriptional activator of ICS1, an enzyme involved in salicylate (SA) biosynthesis upon pathogen attack. This chain is Serine/threonine-protein kinase PCRK1, found in Arabidopsis thaliana (Mouse-ear cress).